A 1454-amino-acid polypeptide reads, in one-letter code: E3 ubiquitin-protein ligase substrate receptor MMS22 (1454 aa).

Residues 159-178 (NSSVQSQRYDSDEEIPKKRH) are disordered. Residues 1201–1454 (YDEGDISRNF…SEPFKTFKNT (254 aa)) form a required for interaction with MMS1 region.

Belongs to the MMS22 family. In terms of assembly, component of a cullin-RING ligase (CRL) composed of 4 subunits: the RING protein HRT1, the cullin RTT101, a linker protein MMS1, and the substrate receptor MMS22. This complex further interacts with RTT107 and CTF4 to form RTT101-MMS1-MMS22-RTT107 and RTT101-MMS1-MMS22-CTF4 complexes respectively. Interacts (via C-ter) with MMS1 (via N-ter). Interacts with RTT107.

It localises to the nucleus. Functionally, substrate targeting component of a cullin-RING-based E3 ubiquitin-protein ligase complex RTT101(MMS1-MMS22). RTT101(MMS1-MMS22) promotes fork progression through damaged DNA or natural pause sites by stabilizing replication proteins like the replication fork-pausing complex (FPC) and leading-strand polymerase at stalled replication forks. RTT101(MMS1-MMS22) ubiquitinates the acetylated histones H3K56ac-H4 at lysine residues H3K121, H3K122 and H3K125. Ubiquitination is required for efficient histone deposition during replication-coupled nucleosome assembly, probably by facilitating the transfer of H3-H4 from ASF1 to other chaperones involved in histone deposition. This Saccharomyces cerevisiae (strain ATCC 204508 / S288c) (Baker's yeast) protein is E3 ubiquitin-protein ligase substrate receptor MMS22 (MMS22).